A 58-amino-acid polypeptide reads, in one-letter code: Bowman-Birk type wound-induced trypsin inhibitor (58 aa).

Disulfide bonds link Cys4-Cys57, Cys5-Cys20, Cys8-Cys53, Cys10-Cys18, Cys27-Cys34, Cys31-Cys46, and Cys36-Cys44.

The protein belongs to the Bowman-Birk serine protease inhibitor family.

In Medicago sativa (Alfalfa), this protein is Bowman-Birk type wound-induced trypsin inhibitor.